The chain runs to 392 residues: MTQNTEPQSPAHTRVIVGMSGGVDSSVAAWLLKDQGYQVEGLFMKNWDEDDGTEYCTAMTDLADAQAVADAIGIKLHTASFAAEYWDRVFEHFLSEYSAGRTPNPDILCNKEVKFRAFLDYAVTLGADYIATGHYTRQRPLNDGSGKAQLLKGLDPNKDQSYFLHAVSGERIARTLFPVGELEKPEVRRIAEEQGFVTHDKKDSTGICFIGERKFTDFLKQYLPAQPGNIETPDGTVIGKHQGLMYHTIGQRQGLGIGGLAEFGDEPWYVAEKDLKRNVLIAVQGKHHPLLFSRGLVSGPVDWVAGEPPAQKFRCKAKTRYRQPDQDCEVTVIDGGVKVVFDDAQRAVTPGQSVVFYQGEVCLGGGVIEQTWRDNEALPARLEHQASEGSDT.

Residues 18–25 (GMSGGVDS) and methionine 44 each bind ATP. An interaction with target base in tRNA region spans residues 104-106 (NPD). Cysteine 109 serves as the catalytic Nucleophile. A disulfide bridge connects residues cysteine 109 and cysteine 208. Glycine 133 lines the ATP pocket. The segment at 158 to 160 (KDQ) is interaction with tRNA. Cysteine 208 functions as the Cysteine persulfide intermediate in the catalytic mechanism. Positions 320 to 321 (RY) are interaction with tRNA.

It belongs to the MnmA/TRMU family.

The protein localises to the cytoplasm. It carries out the reaction S-sulfanyl-L-cysteinyl-[protein] + uridine(34) in tRNA + AH2 + ATP = 2-thiouridine(34) in tRNA + L-cysteinyl-[protein] + A + AMP + diphosphate + H(+). Catalyzes the 2-thiolation of uridine at the wobble position (U34) of tRNA, leading to the formation of s(2)U34. This chain is tRNA-specific 2-thiouridylase MnmA, found in Marinobacter nauticus (strain ATCC 700491 / DSM 11845 / VT8) (Marinobacter aquaeolei).